Consider the following 776-residue polypeptide: Conserved oligomeric Golgi complex subunit 4 (776 aa).

A phosphoserine mark is found at serine 342 and serine 345.

The protein belongs to the COG4 family. Component of the conserved oligomeric Golgi complex which is composed of eight different subunits and is required for normal Golgi morphology and localization.

Its subcellular location is the golgi apparatus membrane. Required for normal Golgi function. The protein is Conserved oligomeric Golgi complex subunit 4 of Drosophila melanogaster (Fruit fly).